Consider the following 458-residue polypeptide: tRNA modification GTPase MnmE (458 aa).

(6S)-5-formyl-5,6,7,8-tetrahydrofolate is bound by residues Arg22, Glu84, and Arg123. The TrmE-type G domain occupies 220-379 (GIATAIIGRP…LETAIADLFF (160 aa)). Residue Asn230 coordinates K(+). GTP contacts are provided by residues 230–235 (NVGKSS), 249–255 (TDIAGTT), and 274–277 (DTAG). Ser234 serves as a coordination point for Mg(2+). Residues Thr249, Ile251, and Thr254 each coordinate K(+). Thr255 contacts Mg(2+). Lys458 contacts (6S)-5-formyl-5,6,7,8-tetrahydrofolate.

It belongs to the TRAFAC class TrmE-Era-EngA-EngB-Septin-like GTPase superfamily. TrmE GTPase family. Homodimer. Heterotetramer of two MnmE and two MnmG subunits. K(+) is required as a cofactor.

The protein localises to the cytoplasm. Exhibits a very high intrinsic GTPase hydrolysis rate. Involved in the addition of a carboxymethylaminomethyl (cmnm) group at the wobble position (U34) of certain tRNAs, forming tRNA-cmnm(5)s(2)U34. The polypeptide is tRNA modification GTPase MnmE (Bacillus cereus (strain ATCC 10987 / NRS 248)).